Consider the following 182-residue polypeptide: Hexose transport activator protein (182 aa).

The disordered stretch occupies residues 46–65 (GIWGPMEKKPGGVGKKKGSE).

Multicopy expression suppresses glucose-uptake defects in various yeast mutants. In Saccharomyces cerevisiae (strain ATCC 204508 / S288c) (Baker's yeast), this protein is Hexose transport activator protein (AHT1).